We begin with the raw amino-acid sequence, 485 residues long: UDP-N-acetylmuramate--L-alanine ligase (485 aa).

120–126 serves as a coordination point for ATP; sequence GSHGKTT.

Belongs to the MurCDEF family.

The protein localises to the cytoplasm. The enzyme catalyses UDP-N-acetyl-alpha-D-muramate + L-alanine + ATP = UDP-N-acetyl-alpha-D-muramoyl-L-alanine + ADP + phosphate + H(+). It participates in cell wall biogenesis; peptidoglycan biosynthesis. Functionally, cell wall formation. This is UDP-N-acetylmuramate--L-alanine ligase from Rickettsia africae (strain ESF-5).